Here is a 232-residue protein sequence, read N- to C-terminus: MTNYREIAWQGLWKNNPGLVQLLGLCPLLAVTATLTNALGLGVATMLVLIGSNILVSLVRDYVPKEIRIPVFVMIIAALVTAVQLLINAYAYGLYLSLGIFLPLIVTNCIIIGRAEAFASRNNAFSAAFDGLMMGLGFTLVLAVLGATREILGQGTLFDGADQLLGPWAKALTIQVWQVDTPFLLAMLPPGAFIVMGLLIALKNVIDKKLKERQPEVAVQPSVTRARITKVS.

The next 6 membrane-spanning stretches (helical) occupy residues 18 to 38 (GLVQ…LTNA), 39 to 59 (LGLG…VSLV), 69 to 89 (IPVF…LINA), 93 to 113 (GLYL…IIIG), 127 to 147 (AAFD…VLGA), and 182 to 202 (PFLL…LIAL).

It belongs to the NqrDE/RnfAE family. In terms of assembly, the complex is composed of six subunits: RnfA, RnfB, RnfC, RnfD, RnfE and RnfG.

It is found in the cell inner membrane. Its function is as follows. Part of a membrane-bound complex that couples electron transfer with translocation of ions across the membrane. This Shewanella sp. (strain ANA-3) protein is Ion-translocating oxidoreductase complex subunit E.